A 309-amino-acid polypeptide reads, in one-letter code: 2-phospho-L-lactate transferase (309 aa).

7,8-didemethyl-8-hydroxy-5-deazariboflavin-binding residues include D48 and K87.

It belongs to the CofD family. Homodimer. It depends on Mg(2+) as a cofactor.

It carries out the reaction (2S)-lactyl-2-diphospho-5'-guanosine + 7,8-didemethyl-8-hydroxy-5-deazariboflavin = oxidized coenzyme F420-0 + GMP + H(+). It functions in the pathway cofactor biosynthesis; coenzyme F420 biosynthesis. Its function is as follows. Catalyzes the transfer of the 2-phospholactate moiety from (2S)-lactyl-2-diphospho-5'-guanosine to 7,8-didemethyl-8-hydroxy-5-deazariboflavin (FO) with the formation of oxidized coenzyme F420-0 and GMP. The protein is 2-phospho-L-lactate transferase of Methanosarcina barkeri (strain Fusaro / DSM 804).